Here is a 449-residue protein sequence, read N- to C-terminus: Exodeoxyribonuclease 7 large subunit (449 aa).

The protein belongs to the XseA family. In terms of assembly, heterooligomer composed of large and small subunits.

The protein localises to the cytoplasm. It carries out the reaction Exonucleolytic cleavage in either 5'- to 3'- or 3'- to 5'-direction to yield nucleoside 5'-phosphates.. In terms of biological role, bidirectionally degrades single-stranded DNA into large acid-insoluble oligonucleotides, which are then degraded further into small acid-soluble oligonucleotides. This Lacticaseibacillus paracasei (strain ATCC 334 / BCRC 17002 / CCUG 31169 / CIP 107868 / KCTC 3260 / NRRL B-441) (Lactobacillus paracasei) protein is Exodeoxyribonuclease 7 large subunit.